Here is a 272-residue protein sequence, read N- to C-terminus: Centromere protein V-like protein 3 (272 aa).

Residues 1–17 (MGRVRNRATAQRRRRKR) show a composition bias toward basic residues. 2 disordered regions span residues 1–23 (MGRV…DPPA) and 65–95 (RRAR…KELD). Residues 77-88 (PSAPLPDPPAPA) show a composition bias toward pro residues. A CENP-V/GFA domain is found at 133–246 (HTGGCHCGAV…EEVGGGDPGE (114 aa)). Positions 137, 139, 157, 159, 162, 201, and 204 each coordinate Zn(2+). Residues 240–272 (GGGDPGEEAAEEHKAIHKTSSQSAPACPREQEQ) are disordered.

The protein belongs to the Gfa family. Zn(2+) is required as a cofactor.

The sequence is that of Centromere protein V-like protein 3 from Homo sapiens (Human).